Here is a 665-residue protein sequence, read N- to C-terminus: GRB2-associated-binding protein 2 (665 aa).

Phosphoserine is present on S2. One can recognise a PH domain in the interval 8-119 (DVVCTGWLRK…WVQSICQICG (112 aa)). The disordered stretch occupies residues 131-184 (RNLSSASHGPRSSPAEFSSSQHLLRERKSSAPSHSSQPTLFTFEPPVSSHMQPT). Residues S135, S142, S143, S149, S150, S160, S165, S211, S220, and S261 each carry the phosphoserine modification. The segment covering 160-170 (SAPSHSSQPTL) has biased composition (polar residues). Position 262 is a phosphothreonine (T262). The residue at position 263 (Y263) is a Phosphotyrosine. T275 carries the post-translational modification Phosphothreonine. Residues S278 and S282 each carry the phosphoserine modification. A Phosphothreonine modification is found at T284. Y290 is modified (phosphotyrosine). Phosphothreonine is present on T328. Residues 338–396 (VATPGDSAIAPPPRPPKPSQAETSQWGSIQQRPPISENSRSVAATIPRRNTLPAMDNSR) form a disordered region. The SH3-binding motif lies at 348 to 355 (PPPRPPKP). A compositionally biased stretch (polar residues) spans 357–379 (QAETSQWGSIQQRPPISENSRSV). S365 is subject to Phosphoserine. A phosphothreonine mark is found at T382 and T388. A Phosphoserine modification is found at S402. T405 carries the phosphothreonine modification. The tract at residues 408-445 (YPARGSGESASWSAEPPGKTAVGRSNSASSDDNYVPMN) is disordered. A Phosphoserine modification is found at S420. Over residues 430-439 (GRSNSASSDD) the composition is skewed to polar residues. Y441 carries the post-translational modification Phosphotyrosine. S469 is subject to Phosphoserine. The disordered stretch occupies residues 491 to 517 (PSRGSEIQPPPVNRNLKPDRKAKPTPL). Residues 499–508 (PPPVNRNLKP) carry the SH3-binding motif. A Phosphoserine modification is found at S532. Composition is skewed to polar residues over residues 548 to 566 (SSSQ…STDS) and 578 to 600 (NPVS…STGS). 2 disordered regions span residues 548 to 632 (SSSQ…KVDY) and 646 to 665 (TMQE…GAKL). S612 is modified (phosphoserine). A Phosphotyrosine modification is found at Y632. Positions 646–659 (TMQEWTDVRQSSEP) are enriched in polar residues.

This sequence belongs to the GAB family. Part of a complex composed of EEIG1, TNFRSF11A/RANK, PLCG2, GAB2, TEC and BTK; complex formation increases in the presence of TNFSF11/RANKL. Interacts with HCK. Interacts with SHC1; may mediate interaction with receptors. Interacts with SYK. Interacts with PI-3 kinase. Interacts with GRB2 (via SH3 2 domain). Interacts (phosphorylated) with PTPN11. Interacts with TNFRSF11A (via cytoplasmic domain). Interacts (phosphorylated) with 14-3-3 family proteins SFN, YWHAB, YWHAE, YWHAG, YWHAH, YWHAQ and YWHAZ; prevents interaction with GRB2 and attenuates GAB2 signaling. In terms of processing, phosphorylated upon EGF stimulation. Phosphorylated on tyrosine residues by HCK upon IL6 signaling. Phosphorylated on tyrosine residue(s) by the thrombopoietin receptor (TPOR), stem cell factor receptor (SCFR), and T-cell and B-cell antigen receptors, gp130, IL-2R and IL-3R. Phosphorylated upon stimulation of TNFRSF11A/RANK by TNFSF11/RANKL. Post-translationally, dephosphorylated by PTPN11. As to expression, ubiquitously expressed.

The protein localises to the cytoplasm. Its subcellular location is the cell membrane. The protein resides in the membrane raft. Functionally, adapter protein which acts downstream of several membrane receptors including cytokine, antigen, hormone, cell matrix and growth factor receptors to regulate multiple signaling pathways. Regulates osteoclast differentiation mediating the TNFRSF11A/RANK signaling. In allergic response, it plays a role in mast cells activation and degranulation through PI-3-kinase regulation. Also involved in the regulation of cell proliferation and hematopoiesis. This chain is GRB2-associated-binding protein 2 (Gab2), found in Mus musculus (Mouse).